The primary structure comprises 436 residues: Amino acid transporter AVT3C (436 aa).

A compositionally biased stretch (polar residues) spans 1 to 13 (MGFQNEASSSSYT). Positions 1–21 (MGFQNEASSSSYTLKIPPPAR) are disordered. The Cytoplasmic segment spans residues 1 to 38 (MGFQNEASSSSYTLKIPPPAREDSPLLGKGPPLSSQFK). Residues 39–59 (TFANVFIAVVGAGVLGLPYAF) traverse the membrane as a helical segment. At 60–65 (KRTGWL) the chain is on the vacuolar side. The helical transmembrane segment at 66–86 (MGVLLLVSVSVLTHHCMMLLV) threads the bilayer. The Cytoplasmic segment spans residues 87 to 118 (YTRRKLDSFNAGISKIGSFGDLGFAVCGSLGR). Residues 119–139 (IVVDLFIILSQAGFCVGYLIF) form a helical membrane-spanning segment. Residues 140–166 (IGTTLANLSDPESPTSLRHQFTRLGSE) are Vacuolar-facing. Residues 167-187 (FLGVSSKSLYIWGCFPFQLGL) traverse the membrane as a helical segment. Residues 188–195 (NSIKTLTH) are Cytoplasmic-facing. The helical transmembrane segment at 196-216 (LAPLSIFADIVDLGAMAVVIV) threads the bilayer. Residues 217-228 (EDSMIILKQRPD) lie on the Vacuolar side of the membrane. The helical transmembrane segment at 229-249 (VVAFGGMSLFLYGMGVAVYSF) threads the bilayer. The Cytoplasmic segment spans residues 250 to 273 (EGVGMVLPLESEMKDKDKFGKVLA). Residues 274-294 (LGMGFISLIYIAFGILGYLAF) traverse the membrane as a helical segment. At 295 to 309 (GEDTMDIITANLGAG) the chain is on the vacuolar side. Residues 310 to 330 (LVSTVVQLGLCINLFFTFPLM) form a helical membrane-spanning segment. Topologically, residues 331–352 (MNPVFEIVERRFSRGMYSAWLR) are cytoplasmic. Residues 353 to 373 (WVLVLAVTLVALFVPNFADFL) traverse the membrane as a helical segment. The Vacuolar portion of the chain corresponds to 374–376 (SLV). Residues 377–397 (GSSTCCVLGFVLPALFHLLVF) form a helical membrane-spanning segment. Residues 398 to 411 (KEEMGWLQWSSDTA) lie on the Cytoplasmic side of the membrane. Residues 412–432 (IVVLGVVLAVSGTWSSLSEIF) traverse the membrane as a helical segment. Over 433 to 436 (SVKV) the chain is Vacuolar.

This sequence belongs to the amino acid/polyamine transporter 2 family. Amino acid/auxin permease (AAAP) (TC 2.A.18.8) subfamily. As to expression, ubiquitous.

Its subcellular location is the vacuole membrane. Translocates preferentially neutral amino acids from the vacuole to the cytoplasm. The sequence is that of Amino acid transporter AVT3C from Arabidopsis thaliana (Mouse-ear cress).